Here is a 251-residue protein sequence, read N- to C-terminus: Pyruvate formate-lyase-activating enzyme (251 aa).

In terms of domain architecture, Radical SAM core spans 15-244 (VDGPGLRYIL…KAAYRYVNFK (230 aa)). [4Fe-4S] cluster is bound by residues Cys29, Cys33, and Cys36. S-adenosyl-L-methionine-binding positions include 35-37 (YCH), Gly79, 134-136 (DIK), and His207.

Belongs to the organic radical-activating enzymes family. [4Fe-4S] cluster serves as cofactor.

It is found in the cytoplasm. The catalysed reaction is glycyl-[formate C-acetyltransferase] + reduced [flavodoxin] + S-adenosyl-L-methionine = glycin-2-yl radical-[formate C-acetyltransferase] + semiquinone [flavodoxin] + 5'-deoxyadenosine + L-methionine + H(+). Functionally, activation of pyruvate formate-lyase under anaerobic conditions by generation of an organic free radical, using S-adenosylmethionine and reduced flavodoxin as cosubstrates to produce 5'-deoxy-adenosine. The sequence is that of Pyruvate formate-lyase-activating enzyme (pflA) from Staphylococcus aureus (strain N315).